Reading from the N-terminus, the 458-residue chain is Bifunctional protein GlmU (458 aa).

The segment at 1-232 is pyrophosphorylase; sequence MISPLSVIIL…TFEIEGVNNR (232 aa). UDP-N-acetyl-alpha-D-glucosamine is bound by residues 10-13, lysine 24, glutamine 79, 84-85, 106-108, glycine 142, glutamate 157, asparagine 172, and asparagine 230; these read LAAG, GT, and YGD. Aspartate 108 contributes to the Mg(2+) binding site. Asparagine 230 is a Mg(2+) binding site. Residues 233-253 are linker; that stretch reads QQLASLERTWQGKLVADLQEA. The tract at residues 254 to 458 is N-acetyltransferase; the sequence is GVQFADPTRV…KDNFQRPTKK (205 aa). Residues arginine 336 and lysine 354 each coordinate UDP-N-acetyl-alpha-D-glucosamine. The Proton acceptor role is filled by histidine 366. The UDP-N-acetyl-alpha-D-glucosamine site is built by tyrosine 369 and asparagine 380. Residues alanine 383, 389-390, serine 408, alanine 426, and arginine 443 each bind acetyl-CoA; that span reads NY.

It in the N-terminal section; belongs to the N-acetylglucosamine-1-phosphate uridyltransferase family. This sequence in the C-terminal section; belongs to the transferase hexapeptide repeat family. As to quaternary structure, homotrimer. It depends on Mg(2+) as a cofactor.

The protein resides in the cytoplasm. The catalysed reaction is alpha-D-glucosamine 1-phosphate + acetyl-CoA = N-acetyl-alpha-D-glucosamine 1-phosphate + CoA + H(+). It carries out the reaction N-acetyl-alpha-D-glucosamine 1-phosphate + UTP + H(+) = UDP-N-acetyl-alpha-D-glucosamine + diphosphate. The protein operates within nucleotide-sugar biosynthesis; UDP-N-acetyl-alpha-D-glucosamine biosynthesis; N-acetyl-alpha-D-glucosamine 1-phosphate from alpha-D-glucosamine 6-phosphate (route II): step 2/2. It functions in the pathway nucleotide-sugar biosynthesis; UDP-N-acetyl-alpha-D-glucosamine biosynthesis; UDP-N-acetyl-alpha-D-glucosamine from N-acetyl-alpha-D-glucosamine 1-phosphate: step 1/1. Its pathway is bacterial outer membrane biogenesis; LPS lipid A biosynthesis. In terms of biological role, catalyzes the last two sequential reactions in the de novo biosynthetic pathway for UDP-N-acetylglucosamine (UDP-GlcNAc). The C-terminal domain catalyzes the transfer of acetyl group from acetyl coenzyme A to glucosamine-1-phosphate (GlcN-1-P) to produce N-acetylglucosamine-1-phosphate (GlcNAc-1-P), which is converted into UDP-GlcNAc by the transfer of uridine 5-monophosphate (from uridine 5-triphosphate), a reaction catalyzed by the N-terminal domain. This chain is Bifunctional protein GlmU, found in Psychrobacter arcticus (strain DSM 17307 / VKM B-2377 / 273-4).